A 486-amino-acid polypeptide reads, in one-letter code: Cardiolipin synthase A (486 aa).

2 helical membrane passes run 3 to 23 (TFYTVVSWLVILGYWVLIAGV) and 38 to 58 (MAWLLIIYILPLVGIIAYLSV). 2 consecutive PLD phosphodiesterase domains span residues 219 to 246 (MDLRQHRKMVMIDNYIAYTGSMNMVDPR) and 399 to 426 (EGGLLHTKSVLVDGELSLVGTVNLDMRS). Catalysis depends on residues His224, Lys226, Asp231, His404, Lys406, and Asp411.

It belongs to the phospholipase D family. Cardiolipin synthase subfamily. ClsA sub-subfamily.

It localises to the cell inner membrane. The enzyme catalyses 2 a 1,2-diacyl-sn-glycero-3-phospho-(1'-sn-glycerol) = a cardiolipin + glycerol. Functionally, catalyzes the reversible phosphatidyl group transfer from one phosphatidylglycerol molecule to another to form cardiolipin (CL) (diphosphatidylglycerol) and glycerol. The sequence is that of Cardiolipin synthase A from Salmonella arizonae (strain ATCC BAA-731 / CDC346-86 / RSK2980).